The chain runs to 728 residues: 1,4-alpha-glucan branching enzyme GlgB (728 aa).

Asp-405 (nucleophile) is an active-site residue. Residue Glu-458 is the Proton donor of the active site.

This sequence belongs to the glycosyl hydrolase 13 family. GlgB subfamily. In terms of assembly, monomer.

It catalyses the reaction Transfers a segment of a (1-&gt;4)-alpha-D-glucan chain to a primary hydroxy group in a similar glucan chain.. It participates in glycan biosynthesis; glycogen biosynthesis. In terms of biological role, catalyzes the formation of the alpha-1,6-glucosidic linkages in glycogen by scission of a 1,4-alpha-linked oligosaccharide from growing alpha-1,4-glucan chains and the subsequent attachment of the oligosaccharide to the alpha-1,6 position. This chain is 1,4-alpha-glucan branching enzyme GlgB, found in Shigella dysenteriae serotype 1 (strain Sd197).